Consider the following 287-residue polypeptide: MRGFGSDSSQASGEEAKCPVNHKTRELWLHQARAAQSASTSAAPALPQSVQVAPASQPSQPSSYSSSSWSSWLRIPFFSQQSQSANSTQQAQPPKLSAPLLDETRVISSIPRTPDATPSACPVNHEVETGASPTGHWVYPSEKQFFEAMRRKGYDPHAADMKTVVPIHNAVNERAWAEILQWEAPYVEPVSKGGCGGPRLHSFSGLGTQHMSPRARINTLLGYQAPFDRHDWVIDRCGKKIEYVIDFYAGRSDGGNAGKLNFYLDVRPKLNSWEGFKMRALRAVGLS.

Over residues methionine 1 to serine 12 the composition is skewed to polar residues. Disordered regions lie at residues methionine 1–serine 63 and glutamine 81–leucine 100. 2 stretches are compositionally biased toward low complexity: residues glutamine 31 to serine 63 and glutamine 81 to glutamine 92.

Belongs to the cytochrome c-type heme lyase family.

It is found in the mitochondrion inner membrane. The enzyme catalyses holo-[cytochrome c] = apo-[cytochrome c] + heme b. Probable lyase that catalyzes the covalent linking of the heme group to the cytochrome C apoprotein to produce the mature functional cytochrome. The polypeptide is Putative holocytochrome-c1 synthase (Chaetomium thermophilum (strain DSM 1495 / CBS 144.50 / IMI 039719) (Thermochaetoides thermophila)).